Consider the following 279-residue polypeptide: Diaminopimelate epimerase (279 aa).

The substrate site is built by Asn12, Gln45, and Asn65. The active-site Proton donor is the Cys74. Substrate-binding positions include 75-76 (GN), Asn162, Asn195, and 213-214 (ER). Cys222 serves as the catalytic Proton acceptor. Position 223–224 (223–224 (GS)) interacts with substrate.

The protein belongs to the diaminopimelate epimerase family. As to quaternary structure, homodimer.

The protein resides in the cytoplasm. The catalysed reaction is (2S,6S)-2,6-diaminopimelate = meso-2,6-diaminopimelate. Its pathway is amino-acid biosynthesis; L-lysine biosynthesis via DAP pathway; DL-2,6-diaminopimelate from LL-2,6-diaminopimelate: step 1/1. In terms of biological role, catalyzes the stereoinversion of LL-2,6-diaminopimelate (L,L-DAP) to meso-diaminopimelate (meso-DAP), a precursor of L-lysine and an essential component of the bacterial peptidoglycan. This chain is Diaminopimelate epimerase, found in Shewanella loihica (strain ATCC BAA-1088 / PV-4).